Reading from the N-terminus, the 353-residue chain is MTIALGKFTKDEKDLFDIMDDWLRRDRFVFVGWSGLLLFPCAYFALGGWFTGTTFVTSWYTHGLASSYLEGCNFLTAAVSTPANSLAHSLLLLWGPEAQGDFTRWCQLGGLWAFVALHGAFALIGFMLRQFELSRSVQLRPYNAIAFSGPIAVFVSVFLIYPLGQSGWFFAPSFGVAAIFRFILFFQGFHNWTLNPFHMMGVAGVLGAALLCAIHGATVENTLFEDGDGANTFRAFNPTQAEETYSMVTANRFWSQIFGVAFSNKRWLHFFMLFVPVTGLWMSALGVVGLALNLRAYDFVSQEIRAAEDPEFETFYTKNILLNEGIRAWMAAQDQPHENLIFPEEVLPRGNAL.

Thr-2 bears the N-acetylthreonine mark. At Thr-2 the chain carries Phosphothreonine. A helical transmembrane segment spans residues 41–61 (CAYFALGGWFTGTTFVTSWYT). His-118 contacts chlorophyll a. The helical transmembrane segment at 125–141 (GFMLRQFELSRSVQLRP) threads the bilayer. Gln-130 and Asn-143 together coordinate pheophytin a. The chain crosses the membrane as a helical span at residues 153–166 (VFVSVFLIYPLGQS). Residue His-198 coordinates chlorophyll a. The helical transmembrane segment at 208–228 (AALLCAIHGATVENTLFEDGD) threads the bilayer. 2 residues coordinate a plastoquinone: His-215 and Phe-262. Residue His-215 participates in Fe cation binding. A Fe cation-binding site is contributed by His-269. A helical transmembrane segment spans residues 279-295 (GLWMSALGVVGLALNLR).

The protein belongs to the reaction center PufL/M/PsbA/D family. PSII is composed of 1 copy each of membrane proteins PsbA, PsbB, PsbC, PsbD, PsbE, PsbF, PsbH, PsbI, PsbJ, PsbK, PsbL, PsbM, PsbT, PsbX, PsbY, PsbZ, Psb30/Ycf12, at least 3 peripheral proteins of the oxygen-evolving complex and a large number of cofactors. It forms dimeric complexes. It depends on The D1/D2 heterodimer binds P680, chlorophylls that are the primary electron donor of PSII, and subsequent electron acceptors. It shares a non-heme iron and each subunit binds pheophytin, quinone, additional chlorophylls, carotenoids and lipids. There is also a Cl(-1) ion associated with D1 and D2, which is required for oxygen evolution. The PSII complex binds additional chlorophylls, carotenoids and specific lipids. as a cofactor.

It is found in the plastid. The protein resides in the chloroplast thylakoid membrane. The enzyme catalyses 2 a plastoquinone + 4 hnu + 2 H2O = 2 a plastoquinol + O2. Functionally, photosystem II (PSII) is a light-driven water:plastoquinone oxidoreductase that uses light energy to abstract electrons from H(2)O, generating O(2) and a proton gradient subsequently used for ATP formation. It consists of a core antenna complex that captures photons, and an electron transfer chain that converts photonic excitation into a charge separation. The D1/D2 (PsbA/PsbD) reaction center heterodimer binds P680, the primary electron donor of PSII as well as several subsequent electron acceptors. D2 is needed for assembly of a stable PSII complex. The protein is Photosystem II D2 protein of Arabis hirsuta (Hairy rock-cress).